The chain runs to 65 residues: Conotoxin Bu19 (65 aa).

Positions 1 to 21 are cleaved as a signal peptide; sequence MGMRMVFTVFLLVVLATTVVS. The propeptide occupies 22–48; the sequence is FTSDRASDGRNAAANDKASDLAALAVR. Intrachain disulfides connect Cys50–Cys56 and Cys51–Cys64. The residue at position 64 (Cys64) is a Cysteine amide.

Belongs to the conotoxin A superfamily. Expressed by the venom duct.

It localises to the secreted. This is Conotoxin Bu19 from Conus bullatus (Bubble cone).